A 99-amino-acid chain; its full sequence is Acylphosphatase-1 (99 aa).

The residue at position 2 (Ala2) is an N-acetylalanine. An Acylphosphatase-like domain is found at 9–99 (SVDYEIFGKV…LDYSDFQIVK (91 aa)). Residues Arg24 and Asn42 contribute to the active site.

The protein belongs to the acylphosphatase family.

The enzyme catalyses an acyl phosphate + H2O = a carboxylate + phosphate + H(+). This Mus musculus (Mouse) protein is Acylphosphatase-1 (Acyp1).